Reading from the N-terminus, the 253-residue chain is Isoprenyl transferase (253 aa).

D30 is a catalytic residue. D30 contacts Mg(2+). Substrate contacts are provided by residues 31–34, W35, H51, and 79–81; these read GNRR and STE. N82 functions as the Proton acceptor in the catalytic mechanism. Residues F83, R85, R202, and 208–210 each bind substrate; that span reads RVS. Residue E221 coordinates Mg(2+).

The protein belongs to the UPP synthase family. As to quaternary structure, homodimer. Mg(2+) serves as cofactor.

In terms of biological role, catalyzes the condensation of isopentenyl diphosphate (IPP) with allylic pyrophosphates generating different type of terpenoids. This is Isoprenyl transferase from Chlamydia muridarum (strain MoPn / Nigg).